We begin with the raw amino-acid sequence, 213 residues long: NADH dehydrogenase [ubiquinone] iron-sulfur protein 7, mitochondrial (213 aa).

The N-terminal 31 residues, M1 to L31, are a transit peptide targeting the mitochondrion. Positions S30–S42 are enriched in low complexity. The disordered stretch occupies residues S30 to T52. Residues C88, C89, C153, and C183 each coordinate [4Fe-4S] cluster.

This sequence belongs to the complex I 20 kDa subunit family. As to quaternary structure, complex I is composed of about 45 different subunits. This is a component of the iron-sulfur (IP) fragment of the enzyme. Requires [4Fe-4S] cluster as cofactor.

It localises to the mitochondrion. It catalyses the reaction a ubiquinone + NADH + 5 H(+)(in) = a ubiquinol + NAD(+) + 4 H(+)(out). In terms of biological role, core subunit of the mitochondrial membrane respiratory chain NADH dehydrogenase (Complex I) that is believed to belong to the minimal assembly required for catalysis. Complex I functions in the transfer of electrons from NADH to the respiratory chain. The immediate electron acceptor for the enzyme is believed to be ubiquinone. The polypeptide is NADH dehydrogenase [ubiquinone] iron-sulfur protein 7, mitochondrial (Solanum tuberosum (Potato)).